A 397-amino-acid chain; its full sequence is MVIILRHVRVFNGVNECDIYLIGTAHVSKDSIEEVEKIISSVSPEGIAVELDDRRFFSLITNEEKKVDLKKVLKEGNFLKFFIYLILANSQKKIGESFGIKPGSEMKKAIEIASKYGLPIYLIDRDIDITLSRLMDRMTFKEKMKIFWELLNSDEEDLELDDDLLNDMVKNPEKFIKLLKEISPTIYEVLVDERDRFMAKRLFELSKNKNSLVAVVGAGHVEGIVRYLKKLENGNDIDLMELIKVKKRKKSLKKLLTYGISLTIISIFLYMICYALNNPELLKMITFQWILFTGGLSALGVLLARGKLITALVAFLSAPITTLVPLPLAAVGTIAGLVELKYREITDKDLVGIINAESIKELLNNNLFRVLLVATLSNLGASIGVFYCLGKFIGFLG.

The next 4 membrane-spanning stretches (helical) occupy residues 255-275 (LLTYGISLTIISIFLYMICYA), 284-304 (MITFQWILFTGGLSALGVLLA), 308-328 (LITALVAFLSAPITTLVPLPL), and 370-390 (VLLVATLSNLGASIGVFYCLG).

The protein resides in the cell membrane. This is an uncharacterized protein from Methanocaldococcus jannaschii (strain ATCC 43067 / DSM 2661 / JAL-1 / JCM 10045 / NBRC 100440) (Methanococcus jannaschii).